A 402-amino-acid polypeptide reads, in one-letter code: CCA-adding enzyme (402 aa).

Residues glycine 32 and arginine 35 each coordinate ATP. The CTP site is built by glycine 32 and arginine 35. 2 residues coordinate Mg(2+): aspartate 45 and aspartate 47. ATP is bound by residues arginine 116, aspartate 159, arginine 162, arginine 165, and arginine 168. Positions 116, 159, 162, 165, and 168 each coordinate CTP.

Belongs to the tRNA nucleotidyltransferase/poly(A) polymerase family. Bacterial CCA-adding enzyme type 3 subfamily. As to quaternary structure, homodimer. Mg(2+) serves as cofactor.

The catalysed reaction is a tRNA precursor + 2 CTP + ATP = a tRNA with a 3' CCA end + 3 diphosphate. It catalyses the reaction a tRNA with a 3' CCA end + 2 CTP + ATP = a tRNA with a 3' CCACCA end + 3 diphosphate. In terms of biological role, catalyzes the addition and repair of the essential 3'-terminal CCA sequence in tRNAs without using a nucleic acid template. Adds these three nucleotides in the order of C, C, and A to the tRNA nucleotide-73, using CTP and ATP as substrates and producing inorganic pyrophosphate. tRNA 3'-terminal CCA addition is required both for tRNA processing and repair. Also involved in tRNA surveillance by mediating tandem CCA addition to generate a CCACCA at the 3' terminus of unstable tRNAs. While stable tRNAs receive only 3'-terminal CCA, unstable tRNAs are marked with CCACCA and rapidly degraded. The protein is CCA-adding enzyme of Streptococcus pyogenes serotype M2 (strain MGAS10270).